Consider the following 445-residue polypeptide: Canavalin (445 aa).

Positions 1–26 (MAFSARFPLWLLLGVVLLASVSASFA) are cleaved as a signal peptide. Cupin type-1 domains lie at 49-207 (YLFR…DEIE) and 249-407 (FNLR…EEVE).

This sequence belongs to the 7S seed storage protein family. Homotrimer.

Its function is as follows. Seed storage protein. The polypeptide is Canavalin (Canavalia gladiata (Sword bean)).